The primary structure comprises 257 residues: Hydroxyethylthiazole kinase 1 (257 aa).

M41 lines the substrate pocket. K117 and T162 together coordinate ATP. A substrate-binding site is contributed by G189.

It belongs to the Thz kinase family. The cofactor is Mg(2+).

The enzyme catalyses 5-(2-hydroxyethyl)-4-methylthiazole + ATP = 4-methyl-5-(2-phosphooxyethyl)-thiazole + ADP + H(+). Its pathway is cofactor biosynthesis; thiamine diphosphate biosynthesis; 4-methyl-5-(2-phosphoethyl)-thiazole from 5-(2-hydroxyethyl)-4-methylthiazole: step 1/1. Its function is as follows. Catalyzes the phosphorylation of the hydroxyl group of 4-methyl-5-beta-hydroxyethylthiazole (THZ). The chain is Hydroxyethylthiazole kinase 1 from Oceanobacillus iheyensis (strain DSM 14371 / CIP 107618 / JCM 11309 / KCTC 3954 / HTE831).